We begin with the raw amino-acid sequence, 57 residues long: DNA gyrase inhibitor YacG (57 aa).

Positions 5, 8, 20, and 24 each coordinate Zn(2+).

It belongs to the DNA gyrase inhibitor YacG family. As to quaternary structure, interacts with GyrB. Zn(2+) serves as cofactor.

In terms of biological role, inhibits all the catalytic activities of DNA gyrase by preventing its interaction with DNA. Acts by binding directly to the C-terminal domain of GyrB, which probably disrupts DNA binding by the gyrase. This chain is DNA gyrase inhibitor YacG, found in Caulobacter vibrioides (strain ATCC 19089 / CIP 103742 / CB 15) (Caulobacter crescentus).